A 1584-amino-acid polypeptide reads, in one-letter code: Dicer-like protein 1 (1584 aa).

The interval 31-60 (EDVVSDNDDRGNASDVESEDGVKRWTVNPE) is disordered. One can recognise a Helicase ATP-binding domain in the interval 129-310 (LFERAKQQNT…RAAAELEALL (182 aa)). 142 to 149 (LDTGSGKT) serves as a coordination point for ATP. Residues 255–258 (DEAH) carry the DEAH box motif. Residues 448 to 621 (KVIMLVRILR…EALPEDRKLT (174 aa)) enclose the Helicase C-terminal domain. In terms of domain architecture, Dicer dsRNA-binding fold spans 654–744 (SLVCLANFTA…QSVFTKQLPE (91 aa)). The PAZ domain occupies 894 to 1028 (KALAYVSENE…LILEPMRISP (135 aa)). RNase III domains follow at residues 1052–1207 (VALD…LTGQ) and 1258–1424 (AKKF…VDSE). The Mg(2+) site is built by Glu1298, Asp1410, and Glu1413. The 88-residue stretch at 1458–1545 (TFVANMMAHK…AKKAIKLLEG (88 aa)) folds into the DRBM domain. Residues Cys1470, His1516, Cys1557, and Cys1559 each contribute to the Zn(2+) site.

The protein belongs to the helicase family. Dicer subfamily. Mg(2+) serves as cofactor. The cofactor is Mn(2+).

In terms of biological role, dicer-like endonuclease involved in cleaving double-stranded RNA in the RNA interference (RNAi) pathway. Produces 21 to 25 bp dsRNAs (siRNAs) which target the selective destruction of homologous RNAs leading to sequence-specific suppression of gene expression, called post-transcriptional gene silencing (PTGS). Part of a broad host defense response against viral infection and transposons. Controls the expression of the non-LTR retrotransposon Tad in the African strain, Adiomopoume. The protein is Dicer-like protein 1 (dcl-1) of Neurospora crassa (strain ATCC 24698 / 74-OR23-1A / CBS 708.71 / DSM 1257 / FGSC 987).